A 1886-amino-acid polypeptide reads, in one-letter code: Nuclear pore membrane glycoprotein 210 (1886 aa).

Positions 1-25 are cleaved as a signal peptide; the sequence is MARASLIQPGLWALLLLQAVGPAVA. At 26 to 1805 the chain is on the perinuclear space side; that stretch reads AKLNIPKVLL…GASLLSHFLD (1780 aa). N-linked (GlcNAc...) asparagine glycans are attached at residues Asn337, Asn484, Asn681, and Asn1039. The 74-residue stretch at 1078 to 1151 folds into the BIG2 domain; it reads FPPFRLIPRK…VQAVDAETGK (74 aa). The helical transmembrane segment at 1806-1828 threads the bilayer; it reads SYQVMFFTFFALLAGTAVTIIAY. The Cytoplasmic portion of the chain corresponds to 1829–1886; the sequence is HTVCAPRELASPLALTPHASPQHSPHYLASSPTAFNTLPSDRKASPPSGLWSPAYASH. Ser1839 is modified (phosphoserine). Thr1844 bears the Phosphothreonine mark. Positions 1866 to 1886 are disordered; sequence LPSDRKASPPSGLWSPAYASH. Ser1873, Ser1876, Ser1880, and Ser1885 each carry phosphoserine.

Belongs to the NUP210 family. In terms of assembly, forms dimers and possibly higher-order oligomers. In terms of processing, N-glycosylated, but not all potential glycosylation sites may be used. Contains high-mannose type oligosaccharides. Post-translationally, phosphorylated at Ser-1880 in mitosis specifically; not phosphorylated in interphase.

The protein localises to the nucleus. It localises to the nuclear pore complex. It is found in the nucleus membrane. Its subcellular location is the endoplasmic reticulum membrane. In terms of biological role, nucleoporin essential for nuclear pore assembly and fusion, nuclear pore spacing, as well as structural integrity. This is Nuclear pore membrane glycoprotein 210 (Nup210) from Rattus norvegicus (Rat).